The sequence spans 434 residues: Trigger factor (434 aa).

Residues 160–245 (GDKVKMNFVG…LTEVLAANLP (86 aa)) enclose the PPIase FKBP-type domain.

This sequence belongs to the FKBP-type PPIase family. Tig subfamily.

Its subcellular location is the cytoplasm. The catalysed reaction is [protein]-peptidylproline (omega=180) = [protein]-peptidylproline (omega=0). Functionally, involved in protein export. Acts as a chaperone by maintaining the newly synthesized protein in an open conformation. Functions as a peptidyl-prolyl cis-trans isomerase. In Shewanella sp. (strain ANA-3), this protein is Trigger factor.